Consider the following 686-residue polypeptide: CAI-1 autoinducer sensor kinase/phosphatase CqsS (686 aa).

6 helical membrane passes run 21-41 (LVGW…EYWF), 47-64 (NLGL…LVFR), 77-97 (GYFL…MMLM), 100-120 (WSTI…LLVH), 124-144 (VMAL…YGLT), and 152-172 (IEWQ…LCFF). A Histidine kinase domain is found at 191 to 416 (GIAHEMRNPL…EFVLSFPRYD (226 aa)). His-194 carries the phosphohistidine; by autocatalysis modification. Positions 569-686 (RILVVDDNQS…VLLNKVAAWV (118 aa)) constitute a Response regulatory domain. Asp-618 bears the 4-aspartylphosphate mark.

Its subcellular location is the cell membrane. The catalysed reaction is ATP + protein L-histidine = ADP + protein N-phospho-L-histidine.. Senses the quorum-sensing autoinducer CAI-1 ((S)-3-hydroxytridecan-4-one) which probably functions as an intragenus signal. The sensory signal is then relayed to LuxU and LuxO. The polypeptide is CAI-1 autoinducer sensor kinase/phosphatase CqsS (cqsS) (Vibrio cholerae serotype O1 (strain ATCC 39315 / El Tor Inaba N16961)).